An 88-amino-acid polypeptide reads, in one-letter code: Small ribosomal subunit protein uS15 (88 aa).

Belongs to the universal ribosomal protein uS15 family. In terms of assembly, part of the 30S ribosomal subunit. Forms a bridge to the 50S subunit in the 70S ribosome, contacting the 23S rRNA.

Its function is as follows. One of the primary rRNA binding proteins, it binds directly to 16S rRNA where it helps nucleate assembly of the platform of the 30S subunit by binding and bridging several RNA helices of the 16S rRNA. Functionally, forms an intersubunit bridge (bridge B4) with the 23S rRNA of the 50S subunit in the ribosome. The chain is Small ribosomal subunit protein uS15 from Geobacter sulfurreducens (strain ATCC 51573 / DSM 12127 / PCA).